Reading from the N-terminus, the 227-residue chain is Ribose-5-phosphate isomerase A (227 aa).

Substrate-binding positions include 26 to 29 (TGST), 82 to 85 (DGAD), and 95 to 98 (KGGG). Glu-104 (proton acceptor) is an active-site residue. Lys-122 serves as a coordination point for substrate.

The protein belongs to the ribose 5-phosphate isomerase family. As to quaternary structure, homodimer.

The enzyme catalyses aldehydo-D-ribose 5-phosphate = D-ribulose 5-phosphate. It functions in the pathway carbohydrate degradation; pentose phosphate pathway; D-ribose 5-phosphate from D-ribulose 5-phosphate (non-oxidative stage): step 1/1. Its function is as follows. Catalyzes the reversible conversion of ribose-5-phosphate to ribulose 5-phosphate. This is Ribose-5-phosphate isomerase A from Streptococcus pneumoniae (strain Hungary19A-6).